The primary structure comprises 102 residues: Small ribosomal subunit protein uS17 (102 aa).

Polar residues predominate over residues 1–15; that stretch reads MTDETASQEASQSTD. Residues 1-20 are disordered; sequence MTDETASQEASQSTDAAAPA.

The protein belongs to the universal ribosomal protein uS17 family. Part of the 30S ribosomal subunit.

Its function is as follows. One of the primary rRNA binding proteins, it binds specifically to the 5'-end of 16S ribosomal RNA. This is Small ribosomal subunit protein uS17 from Frankia casuarinae (strain DSM 45818 / CECT 9043 / HFP020203 / CcI3).